Reading from the N-terminus, the 185-residue chain is Adenine phosphoribosyltransferase (185 aa).

It belongs to the purine/pyrimidine phosphoribosyltransferase family. In terms of assembly, homodimer.

Its subcellular location is the cytoplasm. It carries out the reaction AMP + diphosphate = 5-phospho-alpha-D-ribose 1-diphosphate + adenine. It participates in purine metabolism; AMP biosynthesis via salvage pathway; AMP from adenine: step 1/1. Catalyzes a salvage reaction resulting in the formation of AMP, that is energically less costly than de novo synthesis. This chain is Adenine phosphoribosyltransferase, found in Rubrobacter xylanophilus (strain DSM 9941 / JCM 11954 / NBRC 16129 / PRD-1).